The primary structure comprises 234 residues: Leucyl/phenylalanyl-tRNA--protein transferase (234 aa).

The protein belongs to the L/F-transferase family.

It localises to the cytoplasm. The catalysed reaction is N-terminal L-lysyl-[protein] + L-leucyl-tRNA(Leu) = N-terminal L-leucyl-L-lysyl-[protein] + tRNA(Leu) + H(+). It carries out the reaction N-terminal L-arginyl-[protein] + L-leucyl-tRNA(Leu) = N-terminal L-leucyl-L-arginyl-[protein] + tRNA(Leu) + H(+). It catalyses the reaction L-phenylalanyl-tRNA(Phe) + an N-terminal L-alpha-aminoacyl-[protein] = an N-terminal L-phenylalanyl-L-alpha-aminoacyl-[protein] + tRNA(Phe). In terms of biological role, functions in the N-end rule pathway of protein degradation where it conjugates Leu, Phe and, less efficiently, Met from aminoacyl-tRNAs to the N-termini of proteins containing an N-terminal arginine or lysine. The protein is Leucyl/phenylalanyl-tRNA--protein transferase of Salmonella gallinarum (strain 287/91 / NCTC 13346).